Here is a 922-residue protein sequence, read N- to C-terminus: Dual serine/threonine and tyrosine protein kinase (922 aa).

The region spanning 645 to 899 is the Protein kinase domain; that stretch reads PKLGRELGRG…PLLGIVEPSL (255 aa). ATP is bound by residues 651-659 and Lys-674; that span reads LGRGQYGVV. Residue Asp-770 is the Proton acceptor of the active site.

The protein belongs to the protein kinase superfamily. Ser/Thr protein kinase family.

The protein localises to the cytoplasm. The protein resides in the cell membrane. It is found in the apical cell membrane. It localises to the basolateral cell membrane. Its subcellular location is the cell junction. It carries out the reaction L-seryl-[protein] + ATP = O-phospho-L-seryl-[protein] + ADP + H(+). It catalyses the reaction L-threonyl-[protein] + ATP = O-phospho-L-threonyl-[protein] + ADP + H(+). The catalysed reaction is L-tyrosyl-[protein] + ATP = O-phospho-L-tyrosyl-[protein] + ADP + H(+). Its function is as follows. May act as a positive regulator of ERK phosphorylation downstream of fibroblast growth factor-receptor activation. May induce both caspase-dependent apoptosis and caspase-independent cell death. May play a role in the embryonic development. The chain is Dual serine/threonine and tyrosine protein kinase from Tetraodon nigroviridis (Spotted green pufferfish).